A 391-amino-acid polypeptide reads, in one-letter code: MDQCGTVERELEKVLHKFGGYGQHCERSLEELMEYAGGLRREILQAAEQDGELSGTLSLVLTQCCKRIKDTVQKLASDHKDIHSSVSRVGKAIDKNFDADISSVGIDGCWQNDSQQILSEVMVEHFFRQGMLDVAEELCQEAGLSIDASQKEPFVELNRILEALKVRVLRPALEWAVSNREMLMAQNSSLEFKLHRLYFISLLMGGTVNQREALQYAKNFQPFAENHQKDIQVLMGSLVYLRQGIENSPYVHLLDANQWADICDIFTRDACALLGLSVESPLSVSFSAGCVALPALINIKAVIEQRQCTGVWNQKDELPIEVDLGKKCWYHSIFACPILRQQTTDNNPPMKLVCGHIISRDALNKMFNGSKLKCPYCPMEQSPGDAKQIFF.

The 33-residue stretch at S114–I146 folds into the LisH domain. The CTLH domain occupies P153–Q210. The segment at C336–C377 adopts an RING-Gid-type zinc-finger fold.

As to quaternary structure, identified in the CTLH complex that contains at least RANBP9, MKLN1, MAEA, RMND5A, GID8 and ARMC8.

Its subcellular location is the nucleus. The protein localises to the nucleoplasm. The protein resides in the cytoplasm. It carries out the reaction S-ubiquitinyl-[E2 ubiquitin-conjugating enzyme]-L-cysteine + [acceptor protein]-L-lysine = [E2 ubiquitin-conjugating enzyme]-L-cysteine + N(6)-ubiquitinyl-[acceptor protein]-L-lysine.. Its function is as follows. E3 ubiquitin-protein ligase component of the CTLH complex. The protein is E3 ubiquitin-protein ligase RMND5A (rmnd5a) of Xenopus tropicalis (Western clawed frog).